The primary structure comprises 289 residues: D-xylonolactone lactonase (289 aa).

Residue E17 participates in Fe(2+) binding. D-xylono-1,5-lactone contacts are provided by R98, N100, E119, and N145. Positions 145 and 195 each coordinate Fe(2+). D195 acts as the Proton donor/acceptor in catalysis.

It belongs to the SMP-30/CGR1 family. Fe(2+) serves as cofactor.

It catalyses the reaction D-xylono-1,5-lactone + H2O = D-xylonate + H(+). Its function is as follows. Involved in the degradation of D-xylose. Catalyzes the hydrolysis of D-xylonolactone to D-xylonate. The polypeptide is D-xylonolactone lactonase (Caulobacter vibrioides (strain ATCC 19089 / CIP 103742 / CB 15) (Caulobacter crescentus)).